The sequence spans 185 residues: Peptidyl-tRNA hydrolase (185 aa).

Tyrosine 14 is a tRNA binding site. Catalysis depends on histidine 19, which acts as the Proton acceptor. TRNA-binding residues include phenylalanine 64, asparagine 66, and asparagine 112.

It belongs to the PTH family. As to quaternary structure, monomer.

The protein localises to the cytoplasm. It catalyses the reaction an N-acyl-L-alpha-aminoacyl-tRNA + H2O = an N-acyl-L-amino acid + a tRNA + H(+). Its function is as follows. Hydrolyzes ribosome-free peptidyl-tRNAs (with 1 or more amino acids incorporated), which drop off the ribosome during protein synthesis, or as a result of ribosome stalling. In terms of biological role, catalyzes the release of premature peptidyl moieties from peptidyl-tRNA molecules trapped in stalled 50S ribosomal subunits, and thus maintains levels of free tRNAs and 50S ribosomes. The polypeptide is Peptidyl-tRNA hydrolase (Lactobacillus johnsonii (strain CNCM I-12250 / La1 / NCC 533)).